Reading from the N-terminus, the 402-residue chain is Propionate kinase (402 aa).

N11 and K18 together coordinate ATP. N11 is a binding site for Mg(2+). Position 86 (R86) interacts with substrate. Catalysis depends on D143, which acts as the Proton donor/acceptor. ATP-binding positions include H175, 203–207 (HLGNG), 278–280 (DLR), and 326–330 (GIGEN).

This sequence belongs to the acetokinase family. TdcD subfamily. As to quaternary structure, homodimer. It depends on Mg(2+) as a cofactor.

It carries out the reaction propanoate + ATP = propanoyl phosphate + ADP. The protein operates within amino-acid degradation; L-threonine degradation via propanoate pathway; propanoate from L-threonine: step 4/4. In terms of biological role, catalyzes the conversion of propionyl phosphate and ADP to propionate and ATP. The sequence is that of Propionate kinase from Salmonella typhimurium (strain D23580).